We begin with the raw amino-acid sequence, 447 residues long: 3-O-methyltransferase 2 (447 aa).

S-adenosyl-L-methionine contacts are provided by residues 264-265 (GG), Asp-287, 318-319 (DF), and Arg-334. The active-site Proton acceptor is His-338.

The protein belongs to the class I-like SAM-binding methyltransferase superfamily. Cation-independent O-methyltransferase family. COMT subfamily.

Functionally, S-adenosyl-L-methionine-dependent methyltransferase that preferentially catalyzes the methylation of 3-OH phenolic compounds like isovanillic acid and 3-OH-4-Met cinnamic acid. May play a role in promoting lignin degradation by methylating and inactivating free-hydroxyl phenolic compounds, products of lignin cleavage which are known inhibitors of lignin peroxidases. In Phanerochaete chrysosporium (strain RP-78 / ATCC MYA-4764 / FGSC 9002) (White-rot fungus), this protein is 3-O-methyltransferase 2.